The primary structure comprises 398 residues: NADH-quinone oxidoreductase subunit D (398 aa).

The protein belongs to the complex I 49 kDa subunit family. As to quaternary structure, NDH-1 is composed of 14 different subunits. Subunits NuoB, C, D, E, F, and G constitute the peripheral sector of the complex.

The protein resides in the cell inner membrane. It catalyses the reaction a quinone + NADH + 5 H(+)(in) = a quinol + NAD(+) + 4 H(+)(out). Functionally, NDH-1 shuttles electrons from NADH, via FMN and iron-sulfur (Fe-S) centers, to quinones in the respiratory chain. The immediate electron acceptor for the enzyme in this species is believed to be ubiquinone. Couples the redox reaction to proton translocation (for every two electrons transferred, four hydrogen ions are translocated across the cytoplasmic membrane), and thus conserves the redox energy in a proton gradient. The polypeptide is NADH-quinone oxidoreductase subunit D (Caulobacter vibrioides (strain ATCC 19089 / CIP 103742 / CB 15) (Caulobacter crescentus)).